The chain runs to 156 residues: Ribonuclease 1B pancreatic (156 aa).

An N-terminal signal peptide occupies residues 1–28; the sequence is MALDKSVIPLPLLVVVLLVLGWAQPSLG. Residues Lys35 and Arg38 each coordinate substrate. His40 serves as the catalytic Proton acceptor. Disulfide bonds link Cys54-Cys112, Cys68-Cys123, Cys86-Cys138, and Cys93-Cys100. Asn62 carries an N-linked (GlcNAc...) asparagine glycan. Substrate-binding positions include 69 to 73, Lys94, and Arg113; that span reads KSVNT. Asn116 carries an N-linked (GlcNAc...) asparagine glycan. His147 serves as the catalytic Proton donor.

Belongs to the pancreatic ribonuclease family. Monomer.

The protein resides in the secreted. It catalyses the reaction an [RNA] containing cytidine + H2O = an [RNA]-3'-cytidine-3'-phosphate + a 5'-hydroxy-ribonucleotide-3'-[RNA].. The enzyme catalyses an [RNA] containing uridine + H2O = an [RNA]-3'-uridine-3'-phosphate + a 5'-hydroxy-ribonucleotide-3'-[RNA].. Its function is as follows. Endonuclease that catalyzes the cleavage of RNA on the 3' side of pyrimidine nucleotides. Compared to RNASE1 it has lost activity towards dsRNA. The protein is Ribonuclease 1B pancreatic (RNASE1B) of Pygathrix nemaeus (Red-shanked douc langur).